A 1127-amino-acid chain; its full sequence is E3 ubiquitin-protein ligase TRIM33 (1127 aa).

Positions 1–18 are enriched in gly residues; sequence MAENKGGGEAESGGGGSG. Residues 1–118 are disordered; sequence MAENKGGGEA…PSAGPPPGPP (118 aa). The interval 1-147 is necessary for E3 ubiquitin-protein ligase activity and repression of SMAD4 signaling and transcriptional repression; sequence MAENKGGGEA…AEPKLLPCLH (147 aa). Positions 19 to 37 are enriched in low complexity; sequence SAPVTAGAAGPAAQEAEPP. The segment covering 52–64 has biased composition (gly residues); that stretch reads RAGAEGGAAGPDD. Residues 65 to 97 are compositionally biased toward low complexity; sequence GGVAAASSGSAQAASSPAASVGTGVAGGAVSTP. Over residues 98 to 118 the composition is skewed to pro residues; sequence APAPASAPAPGPSAGPPPGPP. An RING-type zinc finger spans residues 125–154; that stretch reads CAVCQQSLQSRREAEPKLLPCLHSFCLRCL. B box-type zinc fingers lie at residues 212–259 and 271–312; these read KSEQ…IRKK and QRPV…YQFL. Cysteine 217, cysteine 220, cysteine 241, histidine 245, cysteine 276, histidine 279, cysteine 299, and histidine 304 together coordinate Zn(2+). The segment at 299–401 is necessary for oligomerization; the sequence is CQLLEHKEHR…QMKLLQQQND (103 aa). Residues 299–401 are a coiled coil; that stretch reads CQLLEHKEHR…QMKLLQQQND (103 aa). Residues lysine 329, lysine 334, lysine 481, and lysine 504 each participate in a glycyl lysine isopeptide (Lys-Gly) (interchain with G-Cter in SUMO2) cross-link. At arginine 515 the chain carries Asymmetric dimethylarginine; alternate. Arginine 515 carries the omega-N-methylarginine; alternate modification. Residue lysine 527 forms a Glycyl lysine isopeptide (Lys-Gly) (interchain with G-Cter in SUMO2) linkage. An Omega-N-methylarginine modification is found at arginine 535. The disordered stretch occupies residues 536–563; that stretch reads MQQPPAPVPTTTTTTQQHPRQAAPQMLQ. Residue arginine 577 is modified to Asymmetric dimethylarginine. Arginine 591 carries the asymmetric dimethylarginine; alternate modification. Residue arginine 591 is modified to Omega-N-methylarginine; alternate. Residues arginine 598 and arginine 604 each carry the asymmetric dimethylarginine modification. Disordered stretches follow at residues 608 to 629, 673 to 692, and 703 to 818; these read PQYS…HAGP, NPEN…EDAG, and YISG…TPPL. Positions 723-759 are enriched in low complexity; it reads PSALSPGSSGLSNSHTPVRPPSTSSTGSRGSCGSSGR. N6-acetyllysine; alternate occurs at positions 763 and 769. Glycyl lysine isopeptide (Lys-Gly) (interchain with G-Cter in SUMO2); alternate cross-links involve residues lysine 763 and lysine 769. Lysine 774 participates in a covalent cross-link: Glycyl lysine isopeptide (Lys-Gly) (interchain with G-Cter in SUMO2). Residues lysine 776 and lysine 793 each participate in a glycyl lysine isopeptide (Lys-Gly) (interchain with G-Cter in SUMO2); alternate cross-link. Residues lysine 776 and lysine 793 each participate in a glycyl lysine isopeptide (Lys-Gly) (interchain with G-Cter in SUMO1); alternate cross-link. Lysine 793 is subject to N6-acetyllysine; alternate. Residues 793 to 802 are compositionally biased toward basic and acidic residues; sequence KQEKTEDGRR. Residue lysine 796 forms a Glycyl lysine isopeptide (Lys-Gly) (interchain with G-Cter in SUMO2) linkage. At serine 803 the chain carries Phosphoserine. Positions 807 to 818 are enriched in low complexity; that stretch reads LSSPESSLTPPL. Position 815 is a phosphothreonine (threonine 815). A Glycyl lysine isopeptide (Lys-Gly) (interchain with G-Cter in SUMO2) cross-link involves residue lysine 861. Residue serine 862 is modified to Phosphoserine. The segment at 887–934 adopts a PHD-type zinc-finger fold; it reads EDWCAVCQNGGDLLCCEKCPKVFHLTCHVPTLLSFPSGDWICTFCRDI. Residue lysine 951 is modified to N6-acetyllysine. Lysine 953 is modified (N6-acetyllysine; alternate). A Glycyl lysine isopeptide (Lys-Gly) (interchain with G-Cter in SUMO2); alternate cross-link involves residue lysine 953. Residues 957–1080 enclose the Bromo domain; the sequence is GLSPVDQRKC…LYFEDKLTEI (124 aa). Glycyl lysine isopeptide (Lys-Gly) (interchain with G-Cter in SUMO2) cross-links involve residues lysine 1007 and lysine 1043. Threonine 1051 is subject to Phosphothreonine. Lysine 1057 participates in a covalent cross-link: Glycyl lysine isopeptide (Lys-Gly) (interchain with G-Cter in SUMO2). A disordered region spans residues 1088–1127; the sequence is PLPEFEQEEDDGEVTEDSDEDFIQPRRKRLKSDERPVHIK. Over residues 1092-1109 the composition is skewed to acidic residues; sequence FEQEEDDGEVTEDSDEDF. The residue at position 1102 (threonine 1102) is a Phosphothreonine. Residue serine 1105 is modified to Phosphoserine. Lysine 1118 is covalently cross-linked (Glycyl lysine isopeptide (Lys-Gly) (interchain with G-Cter in SUMO2)). The segment covering 1118–1127 has biased composition (basic and acidic residues); it reads KSDERPVHIK. Serine 1119 is subject to Phosphoserine.

It belongs to the TRIM/RBCC family. As to quaternary structure, homooligomer and heterooligomer with TRIM24 and TRIM28 family members. Interacts with SMAD4 in unstimulated cells. Found in a complex with SMAD2 and SMAD3 upon addition of TGF-beta. Interacts with SMAD2 and SMAD3. Interacts with SMAD4 under basal and induced conditions and, upon TGF-beta signaling, with activated SMAD2. Forms a ternary complex with SMAD4 and SMAD2 upon TGF-beta signaling. Post-translationally, sumoylated with SUMO1. Expressed in stem cells at the bottom of the crypts of the colon (at protein level). Expressed in colon adenomas and adenocarcinomas (at protein level). Expressed in brain, lung, liver, spleen, thymus, prostate, kidney, testis, heart, placenta, pancreas, small intestine, ovary, colon, skeletal muscle and hematopoietic progenitors.

The protein localises to the nucleus. It catalyses the reaction S-ubiquitinyl-[E2 ubiquitin-conjugating enzyme]-L-cysteine + [acceptor protein]-L-lysine = [E2 ubiquitin-conjugating enzyme]-L-cysteine + N(6)-ubiquitinyl-[acceptor protein]-L-lysine.. It participates in protein modification; protein ubiquitination. Acts as an E3 ubiquitin-protein ligase. Promotes SMAD4 ubiquitination, nuclear exclusion and degradation via the ubiquitin proteasome pathway. According to PubMed:16751102, does not promote a decrease in the level of endogenous SMAD4. May act as a transcriptional repressor. Inhibits the transcriptional response to TGF-beta/BMP signaling cascade. Plays a role in the control of cell proliferation. Its association with SMAD2 and SMAD3 stimulates erythroid differentiation of hematopoietic stem/progenitor. Monoubiquitinates SMAD4 and acts as an inhibitor of SMAD4-dependent TGF-beta/BMP signaling cascade (Monoubiquitination of SMAD4 hampers its ability to form a stable complex with activated SMAD2/3 resulting in inhibition of TGF-beta/BMP signaling cascade). This Homo sapiens (Human) protein is E3 ubiquitin-protein ligase TRIM33 (TRIM33).